We begin with the raw amino-acid sequence, 907 residues long: Translation initiation factor IF-2 (907 aa).

Residues 26–317 are disordered; the sequence is DAGMKKSSSD…KPKSMQHGFD (292 aa). Composition is skewed to basic and acidic residues over residues 28–44 and 101–248; these read GMKK…EKQK and SAIE…DTDY. Basic residues predominate over residues 299 to 308; that stretch reads KGGRKGKLSK. A tr-type G domain is found at 406-575; it reads PRAPVVTIMG…LLQAEVLELT (170 aa). The G1 stretch occupies residues 415 to 422; it reads GHVDHGKT. GTP is bound at residue 415-422; sequence GHVDHGKT. The segment at 440-444 is G2; the sequence is GITQH. The G3 stretch occupies residues 461-464; that stretch reads DTPG. GTP contacts are provided by residues 461–465 and 515–518; these read DTPGH and NKID. Residues 515–518 are G4; the sequence is NKID. The G5 stretch occupies residues 551 to 553; it reads SAK.

It belongs to the TRAFAC class translation factor GTPase superfamily. Classic translation factor GTPase family. IF-2 subfamily.

The protein localises to the cytoplasm. One of the essential components for the initiation of protein synthesis. Protects formylmethionyl-tRNA from spontaneous hydrolysis and promotes its binding to the 30S ribosomal subunits. Also involved in the hydrolysis of GTP during the formation of the 70S ribosomal complex. The sequence is that of Translation initiation factor IF-2 from Vibrio vulnificus (strain YJ016).